We begin with the raw amino-acid sequence, 467 residues long: Pachytene checkpoint protein 2 homolog (467 aa).

Residue 209-216 (GPPGTGKT) coordinates ATP.

The protein belongs to the AAA ATPase family. PCH2 subfamily.

The protein resides in the chromosome. In terms of biological role, plays a key role in chromosome recombination during meiosis. Mediates meiotic chromosome remodeling and crossover maturation. This Arabidopsis thaliana (Mouse-ear cress) protein is Pachytene checkpoint protein 2 homolog.